An 81-amino-acid polypeptide reads, in one-letter code: Large ribosomal subunit protein bL31B (81 aa).

The protein belongs to the bacterial ribosomal protein bL31 family. Type B subfamily. As to quaternary structure, part of the 50S ribosomal subunit.

The chain is Large ribosomal subunit protein bL31B from Lactobacillus acidophilus (strain ATCC 700396 / NCK56 / N2 / NCFM).